Here is a 149-residue protein sequence, read N- to C-terminus: Large ribosomal subunit protein uL15 (149 aa).

The interval 1-54 is disordered; the sequence is MSLKLHNLKPTPNSRPEKHRKGRGHAAGKGKQAGKGQSGQNKRKGHRLGFEGGQ. Basic residues predominate over residues 17-28; the sequence is EKHRKGRGHAAG.

This sequence belongs to the universal ribosomal protein uL15 family. In terms of assembly, part of the 50S ribosomal subunit.

Its function is as follows. Binds to the 23S rRNA. This chain is Large ribosomal subunit protein uL15, found in Mycoplasmopsis synoviae (strain 53) (Mycoplasma synoviae).